A 93-amino-acid chain; its full sequence is Cell division protein CrgA (93 aa).

A run of 2 helical transmembrane segments spans residues 31–51 (VWFVTLFVGLMLIGLVWLMVF) and 70–90 (LGPWNYAIAFAFMITGLLLTM).

It belongs to the CrgA family.

Its subcellular location is the cell membrane. Its function is as follows. Involved in cell division. The sequence is that of Cell division protein CrgA from Mycobacterium leprae (strain Br4923).